A 360-amino-acid polypeptide reads, in one-letter code: Farnesyl pyrophosphate synthase (360 aa).

Residues K52, R55, and Q90 each coordinate isopentenyl diphosphate. The Mg(2+) site is built by D97 and D101. R106 provides a ligand contact to dimethylallyl diphosphate. R107 serves as a coordination point for isopentenyl diphosphate. K194, T195, Q237, K254, and K263 together coordinate dimethylallyl diphosphate.

Belongs to the FPP/GGPP synthase family. Requires Mg(2+) as cofactor.

It catalyses the reaction isopentenyl diphosphate + dimethylallyl diphosphate = (2E)-geranyl diphosphate + diphosphate. The enzyme catalyses isopentenyl diphosphate + (2E)-geranyl diphosphate = (2E,6E)-farnesyl diphosphate + diphosphate. Its pathway is isoprenoid biosynthesis; farnesyl diphosphate biosynthesis; farnesyl diphosphate from geranyl diphosphate and isopentenyl diphosphate: step 1/1. The protein operates within isoprenoid biosynthesis; geranyl diphosphate biosynthesis; geranyl diphosphate from dimethylallyl diphosphate and isopentenyl diphosphate: step 1/1. Functionally, farnesyl pyrophosphate synthase; part of the second module of ergosterol biosynthesis pathway that includes the middle steps of the pathway. The second module involves the formation of farnesyl diphosphate, which is also an important intermediate in the biosynthesis of ubiquinone, dolichol, heme and prenylated proteins. This module also plays a key role in the biosynthesis of triterpenes such as ganoderic acids (GA), a group of highly oxygenated lanostane-type triterpenoids which are well recognized as a main group of unique bioactive compounds in the medicinal mushroom Ganoderma lucidum. Activity by the mevalonate kinase first converts mevalonate into 5-phosphomevalonate. 5-phosphomevalonate is then further converted to 5-diphosphomevalonate by the phosphomevalonate kinase. The diphosphomevalonate decarboxylase MVD then produces isopentenyl diphosphate. The isopentenyl-diphosphate delta-isomerase then catalyzes the 1,3-allylic rearrangement of the homoallylic substrate isopentenyl (IPP) to its highly electrophilic allylic isomer, dimethylallyl diphosphate (DMAPP). Finally the farnesyl diphosphate synthase FPS catalyzes the sequential condensation of isopentenyl pyrophosphate with dimethylallyl pyrophosphate, and then with the resultant geranylpyrophosphate to the ultimate product farnesyl pyrophosphate. This Ganoderma lucidum (Ling zhi medicinal fungus) protein is Farnesyl pyrophosphate synthase.